A 194-amino-acid polypeptide reads, in one-letter code: Protein GrpE (194 aa).

The tract at residues 1–53 is disordered; that stretch reads MVENEKTSVEETEEKAETEDEMLTEDPSNEDSDEANEEGNELSEEEKRIAELE. Positions 10–44 are enriched in acidic residues; the sequence is EETEEKAETEDEMLTEDPSNEDSDEANEEGNELSE.

It belongs to the GrpE family. Homodimer.

The protein resides in the cytoplasm. Participates actively in the response to hyperosmotic and heat shock by preventing the aggregation of stress-denatured proteins, in association with DnaK and GrpE. It is the nucleotide exchange factor for DnaK and may function as a thermosensor. Unfolded proteins bind initially to DnaJ; upon interaction with the DnaJ-bound protein, DnaK hydrolyzes its bound ATP, resulting in the formation of a stable complex. GrpE releases ADP from DnaK; ATP binding to DnaK triggers the release of the substrate protein, thus completing the reaction cycle. Several rounds of ATP-dependent interactions between DnaJ, DnaK and GrpE are required for fully efficient folding. This Halalkalibacterium halodurans (strain ATCC BAA-125 / DSM 18197 / FERM 7344 / JCM 9153 / C-125) (Bacillus halodurans) protein is Protein GrpE.